Consider the following 423-residue polypeptide: Galactosylceramide sulfotransferase (423 aa).

Topologically, residues 1-12 (MTLLPKKPCKSK) are cytoplasmic. Residues 13 to 35 (AKGLLLGALFTSFLLLLYSYVVP) form a helical; Signal-anchor for type II membrane protein membrane-spanning segment. At 36-423 (PLYPNMAFTT…WKFLRDFLRW (388 aa)) the chain is on the lumenal side. N-linked (GlcNAc...) asparagine glycans are attached at residues Asn66 and Asn312.

Belongs to the galactose-3-O-sulfotransferase family. Expressed in brain, testis, kidney, stomach, small intestine, liver, and lung. Not detected in heart, skeletal muscle, and spleen.

It is found in the golgi apparatus membrane. It carries out the reaction a beta-D-galactosyl-(1&lt;-&gt;1')-N-acylsphing-4-enine + 3'-phosphoadenylyl sulfate = an N-acyl-1-beta-D-(3-O-sulfo)-galactosyl-sphing-4-enine + adenosine 3',5'-bisphosphate + H(+). The catalysed reaction is a 1-O-alkyl-2-acyl-3-O-(beta-D-galactosyl)-sn-glycerol + 3'-phosphoadenylyl sulfate = a 1-O-alkyl-2-acyl-3-(beta-D-3-sulfogalactosyl)-sn-glycerol + adenosine 3',5'-bisphosphate + H(+). It catalyses the reaction a beta-D-Gal-(1&lt;-&gt;1')-ceramide + 3'-phosphoadenylyl sulfate = 1-(3-O-sulfo-beta-D-galactosyl)-ceramide + adenosine 3',5'-bisphosphate + H(+). The enzyme catalyses a 1,2-diacyl-3-O-(beta-D-galactosyl)-sn-glycerol + 3'-phosphoadenylyl sulfate = 1,2-diacyl-3-(3-O-sulfo-beta-D-galactosyl)-sn-glycerol + adenosine 3',5'-bisphosphate + H(+). It carries out the reaction a beta-D-Gal-(1-&gt;4)-beta-D-Glc-(1&lt;-&gt;1)-Cer(d18:1(4E)) + 3'-phosphoadenylyl sulfate = beta-D-3-sulfogalactosyl-(1-&gt;4)-beta-D-glucosyl-(1&lt;-&gt;1')-N-acylsphing-4-enine + adenosine 3',5'-bisphosphate + H(+). Its pathway is lipid metabolism; sphingolipid metabolism. In terms of biological role, catalyzes the transfer of a sulfate group to position 3 of non-reducing beta-galactosyl residues in glycerolipids and sphingolipids, therefore participates in the biosynthesis of sulfoglycolipids. Catalyzes the synthesis of galactosylceramide sulfate (sulfatide), a major lipid component of the myelin sheath and of monogalactosylalkylacylglycerol sulfate (seminolipid), present in spermatocytes. Seems to prefer beta-glycosides at the non-reducing termini of sugar chains attached to a lipid moiety. Also acts on lactosylceramide, galactosyl 1-alkyl-2-sn-glycerol and galactosyl diacylglycerol (in vitro). This is Galactosylceramide sulfotransferase from Mus musculus (Mouse).